Reading from the N-terminus, the 499-residue chain is Endosomal/lysosomal proton channel TMEM175 (499 aa).

The Cytoplasmic segment spans residues 1 to 30; sequence MSRLQTEEQAVDSEGDSSLHRRNEEGTQSS. The disordered stretch occupies residues 1 to 30; sequence MSRLQTEEQAVDSEGDSSLHRRNEEGTQSS. Thr-6 carries the phosphothreonine modification. Residues 31-53 traverse the membrane as a helical segment; it reads HRMLGFSDALLSIIATVMILPVT. Positions 32–38 match the RxxxFSD motif 1 motif; sequence RMLGFSD. The Lumenal segment spans residues 54–74; the sequence is HTEISPEQQFDKSIQKLLATR. The short helix H1-1 stretch occupies residues 55-60; the sequence is TEISPE. The interval 62-68 is short helix H2-1; that stretch reads QFDKSIQ. The helical transmembrane segment at 75–97 threads the bilayer; the sequence is IAVYLMTFLIVTVAWTAHTRLFQ. The Cytoplasmic segment spans residues 98 to 103; the sequence is VVGKID. A helical membrane pass occupies residues 104-125; it reads DTLALLNLACMMTITLLPYTFS. At 126–135 the chain is on the lumenal side; that stretch reads LMVTFPDVPL. A helical transmembrane segment spans residues 136 to 157; sequence GIFLFCVCVIAIGSVQAMIVGY. At 158-181 the chain is on the cytoplasmic side; it reads AFHFPHLLNPQIQCSTHRDLSRRH. A helical transmembrane segment spans residues 182–202; that stretch reads ILHLVLRGPALCFVAAVFSLF. At 203-207 the chain is on the lumenal side; it reads FFPLS. The helical transmembrane segment at 208 to 227 threads the bilayer; the sequence is YLLMVTVIFLPHISKATTWC. At 228–254 the chain is on the cytoplasmic side; sequence KDKLMGQRESPAHDMEPFSIDLHAPLS. The helical transmembrane segment at 255 to 279 threads the bilayer; it reads KERVEAFSDGVYAIVATLLILDICE. The RxxxFSD motif 2 motif lies at 257–263; sequence RVEAFSD. At 280–306 the chain is on the lumenal side; sequence DNVPDPKDVQEKFSGSLVAALGAYGPQ. A short helix H1-2 region spans residues 285–293; sequence PKDVQEKFS. The tract at residues 295-301 is short helix H2-2; the sequence is SLVAALG. Residues 307-329 traverse the membrane as a helical segment; it reads FLAYFGSFATVGLLWFAHHSLFL. Residues 330 to 335 lie on the Cytoplasmic side of the membrane; sequence HVRKAT. The chain crosses the membrane as a helical span at residues 336-357; that stretch reads QTMGLLNILSLAFVGGLPLAYQ. The Lumenal segment spans residues 358–372; sequence QTSAFARQPHDELER. A helical membrane pass occupies residues 373–393; that stretch reads VRVSCAIIFFASIFQFAIWTT. The Cytoplasmic segment spans residues 394 to 413; that stretch reads ALLHQTETLQPAVQFGGQEH. The chain crosses the membrane as a helical span at residues 414-437; that stretch reads AFMFAKLALYPCASLLAFAATCLL. Residues 438 to 439 are Lumenal-facing; sequence SR. The helical transmembrane segment at 440–466 threads the bilayer; it reads FSTAIFHLMQISVPFAFLLLRLLVRLA. At 467–499 the chain is on the cytoplasmic side; it reads LAGLQVLRGLWPHHPQQDQSEPEAQSQLLPDPC.

Belongs to the TMEM175 family. As to quaternary structure, homodimer. Interacts with AKT (AKT1, AKT2 or AKT3); leading to formation of the lysoK(GF) complex, which activates the channel. Interacts with LAMP1; inhibiting the proton channel activity of TMEM175. Interacts with LAMP2; inhibiting the proton channel activity of TMEM175.

The protein resides in the endosome membrane. It is found in the lysosome membrane. It carries out the reaction H(+)(in) = H(+)(out). It catalyses the reaction K(+)(in) = K(+)(out). Its activity is regulated as follows. Active at low pH (under pH 4.6): proton channel activity is activated by luminal side protons. Polyunsaturated fatty acids, such as arachidonic acid, also activate the channel activity. Proton channel activity is directly inhibited by LAMP1 or LAMP2, facilitating lysosomal acidification. Channel activity is activated following interaction with AKT (AKT1, AKT2 or AKT3): interaction promotes activation from closed to an open state. Activation by AKT is independent of AKT serine/threonine-protein kinase activity. Its function is as follows. Proton-activated proton channel that catalyzes proton efflux from endosomes and lysosomes to maintain a steady-state pH. Activated at low pH (under pH 4.6) by luminal side protons: selectively mediates lysosomal proton release from lysosomes, eliciting a proton leak that balances V-ATPase activity to maintain pH homeostasis. Regulation of lumenal pH stability is required for autophagosome-lysosome fusion. Also acts as a potassium channel at higher pH, regulating potassium conductance in endosomes and lysosomes. Constitutes the pore-forming subunit of the lysoK(GF) complex, a complex activated by extracellular growth factors. The lysoK(GF) complex is composed of TMEM175 and AKT (AKT1, AKT2 or AKT3), a major target of growth factor receptors: in the complex, TMEM175 channel is opened by conformational changes by AKT, leading to its activation. The lysoK(GF) complex is required to protect neurons against stress-induced damage. This Mus musculus (Mouse) protein is Endosomal/lysosomal proton channel TMEM175.